Reading from the N-terminus, the 488-residue chain is Germacrene A acid 8-beta-hydroxylase (488 aa).

Residues 2 to 22 (ELFTIFSIVVSSLILFTFWSL) form a helical; Signal-anchor for type II membrane protein membrane-spanning segment. Asparagine 407 carries N-linked (GlcNAc...) asparagine glycosylation. Cysteine 429 provides a ligand contact to heme.

Belongs to the cytochrome P450 family. It depends on heme as a cofactor. Expressed in leaf primordia.

It is found in the membrane. The catalysed reaction is germacra-1(10),4,11(13)-trien-12-oate + reduced [NADPH--hemoprotein reductase] + O2 = 8beta-hydroxygermacra-1(10),4,11(13)-trien-12-oate + oxidized [NADPH--hemoprotein reductase] + H2O + H(+). It functions in the pathway secondary metabolite biosynthesis; terpenoid biosynthesis. Functionally, involved in the biosynthesis of germacrene-derived sesquiterpene lactones. Hydroxylates germacrene A acid to 8-beta-hydroxy-germacrene A acid. Unlike 6-alpha-hydroxy-germacrene A acid, this compound cannot undergo spontaneous lactonization. The polypeptide is Germacrene A acid 8-beta-hydroxylase (Helianthus annuus (Common sunflower)).